The primary structure comprises 233 residues: Protein AC81 (233 aa).

Transmembrane regions (helical) follow at residues Ser171–Phe191 and Ile194–Ile214.

The protein localises to the host nucleus. It is found in the host membrane. Its subcellular location is the virion. Functionally, plays an essential role in the assembly of nucleocapsids with envelopes. This is Protein AC81 (AC81) from Autographa californica nuclear polyhedrosis virus (AcMNPV).